A 214-amino-acid polypeptide reads, in one-letter code: Zinc finger protein 11 (214 aa).

Positions 1–27 (MKRTHLASFSNRDKTQEEEGEDGNGDN) are disordered. Residues 49-71 (YTCSFCRREFRSAQALGGHMNVH) form a C2H2-type zinc finger. A Nuclear localization signal motif is present at residues 72–79 (RRDRAKLR). Positions 89–130 (HHHTPIANPNPNFSSSSSSSTTTAHLEPSLTNQRSKTTPFPS) are disordered. Positions 102 to 111 (SSSSSSSTTT) are enriched in low complexity. Over residues 117–128 (SLTNQRSKTTPF) the composition is skewed to polar residues.

As to expression, expressed in roots, stems, axillary buds and flowers.

It localises to the nucleus. Probable transcription factor that may regulate cell division and growth. This chain is Zinc finger protein 11, found in Arabidopsis thaliana (Mouse-ear cress).